A 182-amino-acid chain; its full sequence is Putative manganese efflux pump MntP (182 aa).

6 helical membrane-spanning segments follow: residues 6–26 (LIPL…VSLG), 37–57 (ILYI…IGMV), 71–91 (HFAG…STIL), 101–121 (IGIS…SVGL), 131–151 (IITI…GLLI), and 162–182 (YGEI…LFPI).

The protein belongs to the MntP (TC 9.B.29) family.

The protein resides in the cell membrane. Probably functions as a manganese efflux pump. The chain is Putative manganese efflux pump MntP from Bacillus cereus (strain B4264).